Consider the following 89-residue polypeptide: Small ribosomal subunit protein uS15 (89 aa).

It belongs to the universal ribosomal protein uS15 family. In terms of assembly, part of the 30S ribosomal subunit. Forms a bridge to the 50S subunit in the 70S ribosome, contacting the 23S rRNA.

In terms of biological role, one of the primary rRNA binding proteins, it binds directly to 16S rRNA where it helps nucleate assembly of the platform of the 30S subunit by binding and bridging several RNA helices of the 16S rRNA. Functionally, forms an intersubunit bridge (bridge B4) with the 23S rRNA of the 50S subunit in the ribosome. This is Small ribosomal subunit protein uS15 from Pectobacterium atrosepticum (strain SCRI 1043 / ATCC BAA-672) (Erwinia carotovora subsp. atroseptica).